A 262-amino-acid polypeptide reads, in one-letter code: Ankyrin repeat domain-containing protein 7 (262 aa).

ANK repeat units lie at residues Lys67–Ile96, Glu100–Leu129, Arg133–Ala162, Asp166–Ala195, and Tyr199–Cys228.

The polypeptide is Ankyrin repeat domain-containing protein 7 (ANKRD7) (Macaca fascicularis (Crab-eating macaque)).